Consider the following 185-residue polypeptide: Small ribosomal subunit protein uS5 (185 aa).

An S5 DRBM domain is found at 18 to 81 (FVDKLVHINR…ESAKRALIRV (64 aa)). Residues 157 to 185 (SPRSVAARRGIKVSQLQSRRRVEDAEATD) form a disordered region. Positions 176-185 (RRVEDAEATD) are enriched in basic and acidic residues.

It belongs to the universal ribosomal protein uS5 family. As to quaternary structure, part of the 30S ribosomal subunit. Contacts proteins S4 and S8.

Its function is as follows. With S4 and S12 plays an important role in translational accuracy. Functionally, located at the back of the 30S subunit body where it stabilizes the conformation of the head with respect to the body. This chain is Small ribosomal subunit protein uS5, found in Xanthobacter autotrophicus (strain ATCC BAA-1158 / Py2).